A 155-amino-acid polypeptide reads, in one-letter code: Ribosomal RNA large subunit methyltransferase H (155 aa).

S-adenosyl-L-methionine contacts are provided by residues L72, G104, and 123–128 (LSRMTF).

This sequence belongs to the RNA methyltransferase RlmH family. As to quaternary structure, homodimer.

It is found in the cytoplasm. It carries out the reaction pseudouridine(1915) in 23S rRNA + S-adenosyl-L-methionine = N(3)-methylpseudouridine(1915) in 23S rRNA + S-adenosyl-L-homocysteine + H(+). Specifically methylates the pseudouridine at position 1915 (m3Psi1915) in 23S rRNA. The polypeptide is Ribosomal RNA large subunit methyltransferase H (Kosmotoga olearia (strain ATCC BAA-1733 / DSM 21960 / TBF 19.5.1)).